Here is a 455-residue protein sequence, read N- to C-terminus: Epoxide hydrolase 1 (455 aa).

Residues 1–21 (MWLEILLTSVLGFAIYWFISR) traverse the membrane as a helical; Signal-anchor for type III membrane protein segment. Over 22–455 (DKEETLPLED…RKFLSVLERQ (434 aa)) the chain is Cytoplasmic. D226 functions as the Nucleophile in the catalytic mechanism. R295 is modified (dimethylated arginine). Y374 serves as the catalytic Proton donor. Residue H431 is the Proton acceptor of the active site.

It belongs to the peptidase S33 family. In terms of tissue distribution, found in liver.

The protein localises to the microsome membrane. It localises to the endoplasmic reticulum membrane. The enzyme catalyses cis-stilbene oxide + H2O = (1R,2R)-hydrobenzoin. It catalyses the reaction 1-(4-methoxyphenyl)-N-methyl-N-[(3-methyloxetan-3-yl)methyl]methanamine + H2O = 2-{[(4-methoxybenzyl)(methyl)amino]methyl}-2-methylpropane-1,3-diol. The catalysed reaction is 8,9-epoxy-(5Z,11Z,14Z)-eicosatrienoate + H2O = 8,9-dihydroxy-(5Z,11Z,14Z)-eicosatrienoate. It carries out the reaction 11,12-epoxy-(5Z,8Z,14Z)-eicosatrienoate + H2O = 11,12-dihydroxy-(5Z,8Z,14Z)-eicosatrienoate. The enzyme catalyses 2-(5Z,8Z,11Z,14Z-eicosatetraenoyl)-glycerol + H2O = glycerol + (5Z,8Z,11Z,14Z)-eicosatetraenoate + H(+). With respect to regulation, inhibited by 10-hydroxystearamide and methoxy-arachidonyl fluorophosphate. Functionally, biotransformation enzyme that catalyzes the hydrolysis of arene and aliphatic epoxides to less reactive and more water soluble dihydrodiols by the trans addition of water. Plays a role in the metabolism of endogenous lipids such as epoxide-containing fatty acids. Metabolizes the abundant endocannabinoid 2-arachidonoylglycerol (2-AG) to free arachidonic acid (AA) and glycerol. Binds 20(S)-hydroxycholesterol (20(S)-OHC). The protein is Epoxide hydrolase 1 of Homo sapiens (Human).